Consider the following 348-residue polypeptide: Phosphoribosylformylglycinamidine cyclo-ligase (348 aa).

Belongs to the AIR synthase family.

The protein localises to the cytoplasm. The catalysed reaction is 2-formamido-N(1)-(5-O-phospho-beta-D-ribosyl)acetamidine + ATP = 5-amino-1-(5-phospho-beta-D-ribosyl)imidazole + ADP + phosphate + H(+). It participates in purine metabolism; IMP biosynthesis via de novo pathway; 5-amino-1-(5-phospho-D-ribosyl)imidazole from N(2)-formyl-N(1)-(5-phospho-D-ribosyl)glycinamide: step 2/2. This chain is Phosphoribosylformylglycinamidine cyclo-ligase, found in Geobacter sulfurreducens (strain ATCC 51573 / DSM 12127 / PCA).